Reading from the N-terminus, the 119-residue chain is Ig heavy chain V region X44 (119 aa).

Residues 1–117 form the Ig-like domain; sequence EVKLLESGGG…WGQGTLVTVS (117 aa).

The sequence is that of Ig heavy chain V region X44 from Mus musculus (Mouse).